The chain runs to 501 residues: Protein YLS7 (501 aa).

The helical; Signal-anchor for type II membrane protein transmembrane segment at 25–45 (IAFAIGGLTSFVIFASLLLFT) threads the bilayer. Positions 69–131 (HSIHDPDRNP…NVSIDEEATQ (63 aa)) are disordered. The segment covering 78-89 (PSPVSSSESPPV) has biased composition (low complexity). The segment covering 94 to 113 (SDDKVLPKGSHDSNDVRLGE) has biased composition (basic and acidic residues). The segment covering 114–124 (ETNSGKSSNVS) has biased composition (polar residues). The GDS motif signature appears at 211-213 (GDS). The disordered stretch occupies residues 438 to 467 (RHDGHPGPYRSPDPKKITKRGPDGQPPPQD). Residues 449–459 (PDPKKITKRGP) are compositionally biased toward basic and acidic residues. The DCXHWCLPGXXDXWN motif motif lies at 467 to 481 (DCLHWCMPGPVDTWN).

The protein belongs to the PC-esterase family. TBL subfamily. Expressed in roots, cauline leaves and flowers.

It is found in the membrane. In terms of biological role, may act as a bridging protein that binds pectin and other cell wall polysaccharides. Probably involved in maintaining esterification of pectins. May be involved in the specific O-acetylation of cell wall polymers. This chain is Protein YLS7 (YLS7), found in Arabidopsis thaliana (Mouse-ear cress).